We begin with the raw amino-acid sequence, 555 residues long: GPI-anchor transamidase component PIGS (555 aa).

The Cytoplasmic portion of the chain corresponds to 2-18 (AAAGAAATHLEVARGKR). A cardiolipin is bound by residues Arg-15 and Arg-18. A helical transmembrane segment spans residues 19-39 (AALFFAAVAIVLGLPLWWKTT). Residues 40-517 (ETYRASLPYS…LHLLYFPDDQ (478 aa)) are Lumenal-facing. Residues Asn-267 and Asn-370 are each glycosylated (N-linked (GlcNAc...) asparagine). A helical membrane pass occupies residues 518 to 532 (KFAIYIPLFLPMAVP). Residues 533-555 (ILLSLVKIFLETRKSWRKPEKTD) lie on the Cytoplasmic side of the membrane.

This sequence belongs to the PIGS family. In terms of assembly, heteropentamer. Part of the GPI-anchor transamidase complex, consisting of PIGK, PIGT, PIGS, PIGU and GAA1.

The protein resides in the endoplasmic reticulum membrane. The protein operates within glycolipid biosynthesis; glycosylphosphatidylinositol-anchor biosynthesis. In terms of biological role, component of the glycosylphosphatidylinositol-anchor (GPI-anchor) transamidase (GPI-T) complex that catalyzes the formation of the linkage between a proprotein and a GPI-anchor and participates in GPI anchored protein biosynthesis. This chain is GPI-anchor transamidase component PIGS, found in Homo sapiens (Human).